Here is a 373-residue protein sequence, read N- to C-terminus: Queuine tRNA-ribosyltransferase (373 aa).

Residue D90 is the Proton acceptor of the active site. Substrate-binding positions include 90–94 (DSGGF), D144, Q193, and G220. The interval 251–257 (GVGTPED) is RNA binding. The active-site Nucleophile is the D270. The interval 275 to 279 (TRNAR) is RNA binding; important for wobble base 34 recognition. The Zn(2+) site is built by C308, C310, C313, and H339.

Belongs to the queuine tRNA-ribosyltransferase family. Homodimer. Within each dimer, one monomer is responsible for RNA recognition and catalysis, while the other monomer binds to the replacement base PreQ1. Zn(2+) is required as a cofactor.

The catalysed reaction is 7-aminomethyl-7-carbaguanine + guanosine(34) in tRNA = 7-aminomethyl-7-carbaguanosine(34) in tRNA + guanine. It functions in the pathway tRNA modification; tRNA-queuosine biosynthesis. Catalyzes the base-exchange of a guanine (G) residue with the queuine precursor 7-aminomethyl-7-deazaguanine (PreQ1) at position 34 (anticodon wobble position) in tRNAs with GU(N) anticodons (tRNA-Asp, -Asn, -His and -Tyr). Catalysis occurs through a double-displacement mechanism. The nucleophile active site attacks the C1' of nucleotide 34 to detach the guanine base from the RNA, forming a covalent enzyme-RNA intermediate. The proton acceptor active site deprotonates the incoming PreQ1, allowing a nucleophilic attack on the C1' of the ribose to form the product. After dissociation, two additional enzymatic reactions on the tRNA convert PreQ1 to queuine (Q), resulting in the hypermodified nucleoside queuosine (7-(((4,5-cis-dihydroxy-2-cyclopenten-1-yl)amino)methyl)-7-deazaguanosine). This is Queuine tRNA-ribosyltransferase from Campylobacter lari (strain RM2100 / D67 / ATCC BAA-1060).